The sequence spans 303 residues: Aspartate carbamoyltransferase catalytic subunit (303 aa).

The carbamoyl phosphate site is built by Arg-48 and Thr-49. Lys-76 lines the L-aspartate pocket. Residues Arg-98, His-129, and Gln-132 each coordinate carbamoyl phosphate. 2 residues coordinate L-aspartate: Arg-162 and Arg-214. Residues Ala-257 and Pro-258 each contribute to the carbamoyl phosphate site.

Belongs to the aspartate/ornithine carbamoyltransferase superfamily. ATCase family. Heterododecamer (2C3:3R2) of six catalytic PyrB chains organized as two trimers (C3), and six regulatory PyrI chains organized as three dimers (R2).

It catalyses the reaction carbamoyl phosphate + L-aspartate = N-carbamoyl-L-aspartate + phosphate + H(+). It participates in pyrimidine metabolism; UMP biosynthesis via de novo pathway; (S)-dihydroorotate from bicarbonate: step 2/3. In terms of biological role, catalyzes the condensation of carbamoyl phosphate and aspartate to form carbamoyl aspartate and inorganic phosphate, the committed step in the de novo pyrimidine nucleotide biosynthesis pathway. The sequence is that of Aspartate carbamoyltransferase catalytic subunit from Leuconostoc citreum (strain KM20).